Reading from the N-terminus, the 475-residue chain is BICD family-like cargo adapter 2 (475 aa).

Residues 56–275 adopt a coiled-coil conformation; the sequence is ELGKALLERN…LKELQDELHM (220 aa). Polar residues-rich tracts occupy residues 286–300 and 308–318; these read HSSL…TAVQ and SAETQSITSGY. The segment at 286–318 is disordered; the sequence is HSSLHSEIQQSTAVQNHEKGRNSAETQSITSGY. The stretch at 340-413 forms a coiled coil; it reads RLQDQVTMQH…ESLNLQLLST (74 aa). Residues 440-450 show a composition bias toward low complexity; sequence QSQKQQETQKP. Positions 440-459 are disordered; the sequence is QSQKQQETQKPPESPQNSFL.

The protein belongs to the BICDR family.

The polypeptide is BICD family-like cargo adapter 2 (bicdl2) (Xenopus tropicalis (Western clawed frog)).